Consider the following 151-residue polypeptide: UPF0561 protein C2orf68 homolog (151 aa).

The interval 1–89 (MEEEGEAQGR…TLKDEPNDNG (89 aa)) is disordered. Basic and acidic residues-rich tracts occupy residues 32 to 46 (LARD…QAKE) and 70 to 85 (RQRE…KDEP).

The protein belongs to the UPF0561 family.

This is UPF0561 protein C2orf68 homolog from Xenopus laevis (African clawed frog).